Reading from the N-terminus, the 160-residue chain is Transcriptional repressor NrdR (160 aa).

A zinc finger lies at 3–34; the sequence is CPFCGHADTQVVDSRVSEEGDTIRRRRRCLSC. The ATP-cone domain occupies 49-139; that stretch reads PTVVKRDGSR…VYKSFEDIGE (91 aa).

Belongs to the NrdR family. Requires Zn(2+) as cofactor.

Its function is as follows. Negatively regulates transcription of bacterial ribonucleotide reductase nrd genes and operons by binding to NrdR-boxes. This is Transcriptional repressor NrdR from Bordetella avium (strain 197N).